The primary structure comprises 270 residues: Urease accessory protein UreD (270 aa).

The protein belongs to the UreD family. In terms of assembly, ureD, UreF and UreG form a complex that acts as a GTP-hydrolysis-dependent molecular chaperone, activating the urease apoprotein by helping to assemble the nickel containing metallocenter of UreC. The UreE protein probably delivers the nickel.

Its subcellular location is the cytoplasm. In terms of biological role, required for maturation of urease via the functional incorporation of the urease nickel metallocenter. This is Urease accessory protein UreD from Actinobacillus pleuropneumoniae serotype 3 (strain JL03).